Reading from the N-terminus, the 190-residue chain is uncharacterized protein (190 aa).

2 disordered regions span residues 1–21 and 155–190; these read MALRGHPEPQPTNTPLSATVG and PEMGQNESLSEERKGHESKRKSGGRGSPSSHPTQAS. The segment covering 181-190 has biased composition (low complexity); sequence SPSSHPTQAS.

This is an uncharacterized protein from Homo sapiens (Human).